An 831-amino-acid chain; its full sequence is DNA replication licensing factor MCM6 (831 aa).

Residues 155–182 (CLDCGSVIKNVEQQFKYTQPTICVSPTC) form a C4-type zinc finger. The tract at residues 258–278 (GERAECRRDSSQQKSSTAGHE) is disordered. Over residues 259-268 (ERAECRRDSS) the composition is skewed to basic and acidic residues. The MCM domain maps to 345-551 (YFNKLVGSMA…VTDYHIAHHI (207 aa)). 395–402 (GDPSCAKS) provides a ligand contact to ATP. An Arginine finger motif is present at residues 527 to 530 (SRFD). The interval 666-705 (SEYQDANGDNMDDTDDIENPVDGEEDQQNGAAEPASATAD) is disordered. Positions 675 to 692 (NMDDTDDIENPVDGEEDQ) are enriched in acidic residues.

Belongs to the MCM family. As to quaternary structure, component of the minichromosome maintenance (MCM) complex, a heterotetramer composed of MCM2, MCM3, MCM4, MCM5, MCM6 and MCM7. Interacts with ETG1. Expressed in shoot apex and flower buds.

The protein localises to the nucleus. It catalyses the reaction ATP + H2O = ADP + phosphate + H(+). Functionally, probable component of the MCM2-7 complex (MCM complex) that may function as a DNA helicase and which is essential to undergo a single round of replication initiation and elongation per cell cycle in eukaryotic cells. In Arabidopsis thaliana (Mouse-ear cress), this protein is DNA replication licensing factor MCM6 (MCM6).